Reading from the N-terminus, the 64-residue chain is Translation machinery-associated protein 7 homolog (64 aa).

A disordered region spans residues 1-64; it reads MSGREGGKKK…GGGIKKSGKK (64 aa). Positions 27 to 38 are enriched in basic and acidic residues; that stretch reads MAFKQKQKEQQK. The stretch at 27-50 forms a coiled coil; sequence MAFKQKQKEQQKALEAAKANASKK. Positions 39–50 are enriched in low complexity; it reads ALEAAKANASKK. The segment covering 53–64 has biased composition (gly residues); sequence LVGGGIKKSGKK.

The protein is Translation machinery-associated protein 7 homolog of Drosophila melanogaster (Fruit fly).